A 300-amino-acid chain; its full sequence is tRNA pseudouridine synthase B (300 aa).

Catalysis depends on Asp-38, which acts as the Nucleophile.

This sequence belongs to the pseudouridine synthase TruB family. Type 1 subfamily.

The enzyme catalyses uridine(55) in tRNA = pseudouridine(55) in tRNA. Responsible for synthesis of pseudouridine from uracil-55 in the psi GC loop of transfer RNAs. The chain is tRNA pseudouridine synthase B from Dehalococcoides mccartyi (strain ATCC BAA-2266 / KCTC 15142 / 195) (Dehalococcoides ethenogenes (strain 195)).